The following is a 394-amino-acid chain: Proliferation-associated protein 2G4 (394 aa).

N-acetylserine is present on Ser-2. A Phosphoserine modification is found at Ser-2. Positions 2 to 48 (SGEDEQQEQTIAEDLVVTKYKMGGDIANRVLRSLVEASSSGVSVLSL) are necessary for nucleolar localization. Residues 46–54 (LSLCEKGDA) are RNA-binding. Lys-298 participates in a covalent cross-link: Glycyl lysine isopeptide (Lys-Gly) (interchain with G-Cter in SUMO2). The interval 301–394 (LLQPFNVLYE…ETLEENEAGD (94 aa)) is necessary for nucleolar localization. Ser-335 bears the Phosphoserine mark. The interval 358 to 394 (LQSSASRKTQKKKKKKASKTAENATSGETLEENEAGD) is disordered. Ser-361 bears the Phosphoserine; by PKC/PRKCD mark. Positions 361 to 375 (SASRKTQKKKKKKAS) are interaction with RNA. A compositionally biased stretch (basic residues) spans 365 to 375 (KTQKKKKKKAS). Phosphothreonine is present on residues Thr-366 and Thr-386.

This sequence belongs to the peptidase M24 family. As to quaternary structure, isoform 2 interacts with the cytoplasmic domain of non-phosphorylated ERBB3; the interaction requires PKC activity. Interacts with AR. Treatment with HRG leads to dissociation from ERBB3 and increases association with AR. Interacts with NCL/nucleolin. Component of a ribonucleoprotein complex containing at least PA2G4, NCL, TOP1, PABPC2, RPLP0, acetylated histone H1 (HIST1H1A or H1F1), histone H1 2/4, RPL4, RPL8, RPL15, RPL18, RPL18A, RPL21, RPL11, RPL12, RPL28, RPL27, RPLP2 and RPL24. Interacts with HDAC2. Interacts with RB1; the interaction is enhanced upon PA2G4 dephosphorylation. Interacts with AKT1. Isoform 1 and isoform 2 interact with RNF20. Isoform 2 interacts with HUWE1. Interacts with DNAJC21. In terms of processing, phosphorylated on serine and threonine residues. Phosphorylation is enhanced by HRG treatment. Basal phosphorylation is PKC-dependent and HRG-induced phosphorylation is predominantly PKC-independent. Phosphorylation at Ser-361 by PKC/PRKCD regulates its nucleolar localization. In cancer cells, isoform 2 is polyubiquitinated leading to its proteasomal degradation and phosphorylation by PKC/PRKCD enhances polyubiquitination. In terms of tissue distribution, isoform 2 is undetectable whereas isoform 1 is strongly expressed in cancer cells (at protein level). Isoform 1 and isoform 2 are widely expressed, including heart, brain, lung, pancreas, skeletal muscle, kidney, placenta and liver.

The protein resides in the cytoplasm. It is found in the nucleus. It localises to the nucleolus. Its function is as follows. May play a role in a ERBB3-regulated signal transduction pathway. Seems be involved in growth regulation. Acts a corepressor of the androgen receptor (AR) and is regulated by the ERBB3 ligand neuregulin-1/heregulin (HRG). Inhibits transcription of some E2F1-regulated promoters, probably by recruiting histone acetylase (HAT) activity. Binds RNA. Associates with 28S, 18S and 5.8S mature rRNAs, several rRNA precursors and probably U3 small nucleolar RNA. May be involved in regulation of intermediate and late steps of rRNA processing. May be involved in ribosome assembly. Mediates cap-independent translation of specific viral IRESs (internal ribosomal entry site). Regulates cell proliferation, differentiation, and survival. Isoform 1 suppresses apoptosis whereas isoform 2 promotes cell differentiation. This Homo sapiens (Human) protein is Proliferation-associated protein 2G4 (PA2G4).